We begin with the raw amino-acid sequence, 162 residues long: Nucleotide-binding protein Francci3_0558 (162 aa).

It belongs to the YajQ family.

Its function is as follows. Nucleotide-binding protein. The chain is Nucleotide-binding protein Francci3_0558 from Frankia casuarinae (strain DSM 45818 / CECT 9043 / HFP020203 / CcI3).